A 164-amino-acid polypeptide reads, in one-letter code: R-phycoerythrin alpha chain (164 aa).

The (2R,3E)-phycoerythrobilin site is built by Cys82 and Cys139.

It belongs to the phycobiliprotein family. In terms of assembly, heterodimer of an alpha and a beta chain. Post-translationally, contains two covalently linked bilin chromophores.

The protein localises to the plastid. Its subcellular location is the chloroplast thylakoid membrane. Functionally, light-harvesting photosynthetic bile pigment-protein from the phycobiliprotein complex. This Pyropia haitanensis (Red seaweed) protein is R-phycoerythrin alpha chain (cpeA).